Consider the following 540-residue polypeptide: CTP synthase (540 aa).

An amidoligase domain region spans residues 1-265; sequence MVRFIFITGG…DNKVLKFFNL (265 aa). Residue serine 13 participates in CTP binding. A UTP-binding site is contributed by serine 13. ATP is bound by residues 14–19 and aspartate 71; that span reads SLGKGL. 2 residues coordinate Mg(2+): aspartate 71 and glutamate 139. CTP-binding positions include 146 to 148, 186 to 191, and lysine 222; these read DIE and KTKPTQ. Residues 186–191 and lysine 222 each bind UTP; that span reads KTKPTQ. In terms of domain architecture, Glutamine amidotransferase type-1 spans 290 to 539; it reads RIAIIAKYHK…VEAAIKYNKN (250 aa). Glycine 352 is a binding site for L-glutamine. Cysteine 379 acts as the Nucleophile; for glutamine hydrolysis in catalysis. L-glutamine contacts are provided by residues 380 to 383, glutamate 403, and arginine 467; that span reads LGMQ. Active-site residues include histidine 512 and glutamate 514.

It belongs to the CTP synthase family. As to quaternary structure, homotetramer.

It catalyses the reaction UTP + L-glutamine + ATP + H2O = CTP + L-glutamate + ADP + phosphate + 2 H(+). It carries out the reaction L-glutamine + H2O = L-glutamate + NH4(+). The enzyme catalyses UTP + NH4(+) + ATP = CTP + ADP + phosphate + 2 H(+). Its pathway is pyrimidine metabolism; CTP biosynthesis via de novo pathway; CTP from UDP: step 2/2. With respect to regulation, allosterically activated by GTP, when glutamine is the substrate; GTP has no effect on the reaction when ammonia is the substrate. The allosteric effector GTP functions by stabilizing the protein conformation that binds the tetrahedral intermediate(s) formed during glutamine hydrolysis. Inhibited by the product CTP, via allosteric rather than competitive inhibition. Its function is as follows. Catalyzes the ATP-dependent amination of UTP to CTP with either L-glutamine or ammonia as the source of nitrogen. Regulates intracellular CTP levels through interactions with the four ribonucleotide triphosphates. This chain is CTP synthase, found in Rickettsia bellii (strain RML369-C).